A 237-amino-acid polypeptide reads, in one-letter code: Protein GrpE (237 aa).

Disordered stretches follow at residues 1–52 (MSGD…RLQQ) and 200–237 (KVSMGPGPQSGASPSSAQSNDDSTATFQGEADPAEPGV). Positions 27–40 (ASMNSDEGQPSAQS) are enriched in polar residues. Over residues 204 to 218 (GPGPQSGASPSSAQS) the composition is skewed to low complexity.

It belongs to the GrpE family. In terms of assembly, homodimer.

It localises to the cytoplasm. Functionally, participates actively in the response to hyperosmotic and heat shock by preventing the aggregation of stress-denatured proteins, in association with DnaK and GrpE. It is the nucleotide exchange factor for DnaK and may function as a thermosensor. Unfolded proteins bind initially to DnaJ; upon interaction with the DnaJ-bound protein, DnaK hydrolyzes its bound ATP, resulting in the formation of a stable complex. GrpE releases ADP from DnaK; ATP binding to DnaK triggers the release of the substrate protein, thus completing the reaction cycle. Several rounds of ATP-dependent interactions between DnaJ, DnaK and GrpE are required for fully efficient folding. In Prochlorococcus marinus (strain MIT 9303), this protein is Protein GrpE.